Reading from the N-terminus, the 234-residue chain is Glucosamine-6-phosphate deaminase (234 aa).

The active-site Proton acceptor; for enolization step is aspartate 62. Asparagine 128 functions as the For ring-opening step in the catalytic mechanism. Histidine 130 functions as the Proton acceptor; for ring-opening step in the catalytic mechanism. Glutamate 135 acts as the For ring-opening step in catalysis.

It belongs to the glucosamine/galactosamine-6-phosphate isomerase family. NagB subfamily.

It carries out the reaction alpha-D-glucosamine 6-phosphate + H2O = beta-D-fructose 6-phosphate + NH4(+). The protein operates within amino-sugar metabolism; N-acetylneuraminate degradation; D-fructose 6-phosphate from N-acetylneuraminate: step 5/5. Its function is as follows. Catalyzes the reversible isomerization-deamination of glucosamine 6-phosphate (GlcN6P) to form fructose 6-phosphate (Fru6P) and ammonium ion. In Streptococcus pyogenes serotype M49 (strain NZ131), this protein is Glucosamine-6-phosphate deaminase.